A 153-amino-acid polypeptide reads, in one-letter code: ORM1-like protein 2 (153 aa).

Topologically, residues 1 to 21 (MNVGVAHSEVNPNTRVMSSRG) are cytoplasmic. The next 2 membrane-spanning stretches (helical) occupy residues 22-42 (IWLA…SIPF) and 43-63 (FSIP…MYLL). The Cytoplasmic portion of the chain corresponds to 64–105 (LHTVKGTPFETPDQGKDRLLTHWEQIDYGMQCTSSRKFLSIS). Residues 106–126 (PVVLYLLTSFYIKYDPAHFMI) traverse the membrane as a helical segment. The Extracellular segment spans residues 127–153 (NTASLLSVLLPKLPQFHGVRVFGINKY).

This sequence belongs to the ORM family. As to quaternary structure, ceramide-sensitive subunit of the serine palmitoyltransferase (SPT) complex, which is also composed of SPTLC1, SPTLC2/3 and SPTSSA/B.

It is found in the endoplasmic reticulum membrane. Plays an essential role in the homeostatic regulation of sphingolipid de novo biosynthesis by modulating the activity of the serine palmitoyltransferase (SPT) in response to ceramide levels. When complexed to SPT, the binding of ceramides to its N-terminus stabilizes a conformation that block SPT substrate entry, hence preventing SPT catalytic activity. Through this mechanism, maintains ceramide levels at sufficient concentrations for the production of complex sphingolipids, but which prevents the accumulation of ceramides to levels that trigger apoptosis. The sequence is that of ORM1-like protein 2 (ORMDL2) from Gallus gallus (Chicken).